Here is a 657-residue protein sequence, read N- to C-terminus: Glycogen debranching enzyme (657 aa).

Residue Asp-336 is the Nucleophile of the active site. Glu-371 acts as the Proton donor in catalysis. Over residues 458 to 467 (NEANGEENRD) the composition is skewed to basic and acidic residues. Residues 458-479 (NEANGEENRDGTNNNYSNNHGK) are disordered.

The protein belongs to the glycosyl hydrolase 13 family.

The enzyme catalyses Hydrolysis of (1-&gt;6)-alpha-D-glucosidic linkages to branches with degrees of polymerization of three or four glucose residues in limit dextrin.. It functions in the pathway glycan degradation; glycogen degradation. Removes maltotriose and maltotetraose chains that are attached by 1,6-alpha-linkage to the limit dextrin main chain, generating a debranched limit dextrin. This chain is Glycogen debranching enzyme, found in Shigella sonnei (strain Ss046).